The primary structure comprises 202 residues: CASP-like protein 1U4 (202 aa).

The Cytoplasmic segment spans residues 1-10 (MCLPAKWLHP). Residues 11-31 (VSLIFRVAGIGLAAVSAAAML) form a helical membrane-spanning segment. The Extracellular segment spans residues 32-56 (TASQCTVYADYGWRPRTVTYSDFPA). A helical transmembrane segment spans residues 57–77 (FVYLVAATAIATLLEAVALFL). At 78–94 (SWSKKGKSKKSWRVLTM) the chain is on the cytoplasmic side. The chain crosses the membrane as a helical span at residues 95 to 115 (LLLGAVVPALLYTSAGAAFAV). Over 116–146 (GWEDIYYYLEPIGRRFSVCRSSVAGGRFCEH) the chain is Extracellular. A helical membrane pass occupies residues 147–167 (VHVSMWLALGAAVAVSFAEFL). The Cytoplasmic segment spans residues 168 to 202 (TTFRWCHGSGSCSDSDSDSDSDSESGCGHGCHCKH).

Belongs to the Casparian strip membrane proteins (CASP) family. In terms of assembly, homodimer and heterodimers.

It is found in the cell membrane. In Sorghum bicolor (Sorghum), this protein is CASP-like protein 1U4.